Here is a 110-residue protein sequence, read N- to C-terminus: Insulin (110 aa).

The first 24 residues, 1-24, serve as a signal peptide directing secretion; it reads MALWMRLLPLLALLALWGPDPAAA. Disulfide bonds link Cys31-Cys96, Cys43-Cys109, and Cys95-Cys100. Positions 57–87 are cleaved as a propeptide — c peptide; the sequence is EAEDLQVGQVELGGGPGAGSLQPLALEGSLQ.

The protein belongs to the insulin family. In terms of assembly, heterodimer of a B chain and an A chain linked by two disulfide bonds.

Its subcellular location is the secreted. Its function is as follows. Insulin decreases blood glucose concentration. It increases cell permeability to monosaccharides, amino acids and fatty acids. It accelerates glycolysis, the pentose phosphate cycle, and glycogen synthesis in liver. The sequence is that of Insulin (INS) from Gorilla gorilla gorilla (Western lowland gorilla).